The primary structure comprises 202 residues: ATP-dependent Clp protease proteolytic subunit (202 aa).

S98 acts as the Nucleophile in catalysis. Residue H123 is part of the active site.

The protein belongs to the peptidase S14 family. In terms of assembly, fourteen ClpP subunits assemble into 2 heptameric rings which stack back to back to give a disk-like structure with a central cavity, resembling the structure of eukaryotic proteasomes.

The protein resides in the cytoplasm. The catalysed reaction is Hydrolysis of proteins to small peptides in the presence of ATP and magnesium. alpha-casein is the usual test substrate. In the absence of ATP, only oligopeptides shorter than five residues are hydrolyzed (such as succinyl-Leu-Tyr-|-NHMec, and Leu-Tyr-Leu-|-Tyr-Trp, in which cleavage of the -Tyr-|-Leu- and -Tyr-|-Trp bonds also occurs).. Its function is as follows. Cleaves peptides in various proteins in a process that requires ATP hydrolysis. Has a chymotrypsin-like activity. Plays a major role in the degradation of misfolded proteins. This is ATP-dependent Clp protease proteolytic subunit from Syntrophobacter fumaroxidans (strain DSM 10017 / MPOB).